We begin with the raw amino-acid sequence, 177 residues long: Cell division inhibitor SulA (177 aa).

The tract at residues 112-118 (ALASGNY) is ftsZ binding. The lon protease binding stretch occupies residues 170-177 (KIHSIHYH).

It belongs to the SulA family. In terms of assembly, interacts with FtsZ. Post-translationally, is rapidly cleaved and degraded by the Lon protease once DNA damage is repaired.

Component of the SOS system and an inhibitor of cell division. Accumulation of SulA causes rapid cessation of cell division and the appearance of long, non-septate filaments. In the presence of GTP, binds a polymerization-competent form of FtsZ in a 1:1 ratio, thus inhibiting FtsZ polymerization and therefore preventing it from participating in the assembly of the Z ring. This mechanism prevents the premature segregation of damaged DNA to daughter cells during cell division. This is Cell division inhibitor SulA from Photorhabdus laumondii subsp. laumondii (strain DSM 15139 / CIP 105565 / TT01) (Photorhabdus luminescens subsp. laumondii).